We begin with the raw amino-acid sequence, 337 residues long: ATP-dependent 6-phosphofructokinase (337 aa).

Gly-11 lines the ATP pocket. Position 21–25 (21–25 (RAVVR)) interacts with ADP. Residues 72 to 73 (RY) and 102 to 105 (GDGS) contribute to the ATP site. A Mg(2+)-binding site is contributed by Asp-103. 125 to 127 (TID) provides a ligand contact to substrate. The active-site Proton acceptor is the Asp-127. Arg-154 is a binding site for ADP. Substrate is bound by residues Arg-162 and 169–171 (MGR). Residues 185–187 (GAD), Arg-212, and 214–216 (KNH) each bind ADP. Residues Glu-223, Arg-245, and 251-254 (HILR) contribute to the substrate site.

It belongs to the phosphofructokinase type A (PFKA) family. ATP-dependent PFK group I subfamily. Prokaryotic clade 'B1' sub-subfamily. In terms of assembly, homotetramer. The cofactor is Mg(2+).

The protein localises to the cytoplasm. The enzyme catalyses beta-D-fructose 6-phosphate + ATP = beta-D-fructose 1,6-bisphosphate + ADP + H(+). Its pathway is carbohydrate degradation; glycolysis; D-glyceraldehyde 3-phosphate and glycerone phosphate from D-glucose: step 3/4. With respect to regulation, allosterically activated by ADP and other diphosphonucleosides, and allosterically inhibited by phosphoenolpyruvate. In terms of biological role, catalyzes the phosphorylation of D-fructose 6-phosphate to fructose 1,6-bisphosphate by ATP, the first committing step of glycolysis. The sequence is that of ATP-dependent 6-phosphofructokinase from Streptococcus equi subsp. equi (strain 4047).